We begin with the raw amino-acid sequence, 163 residues long: Probable chemoreceptor glutamine deamidase CheD (163 aa).

The protein belongs to the CheD family.

It catalyses the reaction L-glutaminyl-[protein] + H2O = L-glutamyl-[protein] + NH4(+). Probably deamidates glutamine residues to glutamate on methyl-accepting chemotaxis receptors (MCPs), playing an important role in chemotaxis. The sequence is that of Probable chemoreceptor glutamine deamidase CheD from Pyrococcus abyssi (strain GE5 / Orsay).